The following is a 305-amino-acid chain: Nucleotide-binding protein Mpe_A3336 (305 aa).

22–29 contacts ATP; the sequence is GISGSGKS. 74–77 is a binding site for GTP; sequence DVRS.

Belongs to the RapZ-like family.

In terms of biological role, displays ATPase and GTPase activities. The protein is Nucleotide-binding protein Mpe_A3336 of Methylibium petroleiphilum (strain ATCC BAA-1232 / LMG 22953 / PM1).